A 1456-amino-acid polypeptide reads, in one-letter code: Macrophage mannose receptor 1 (1456 aa).

An N-terminal signal peptide occupies residues 1 to 19 (MRLLLLLAFISVIPVSVQL). Topologically, residues 20–1388 (LDARQFLIYN…DPQPKGSSKA (1369 aa)) are extracellular. The region spanning 22–142 (ARQFLIYNED…SGLWSRWKVY (121 aa)) is the Ricin B-type lectin domain. 7 disulfide bridges follow: cysteine 35-cysteine 49, cysteine 74-cysteine 91, cysteine 102-cysteine 149, cysteine 168-cysteine 194, cysteine 182-cysteine 209, cysteine 247-cysteine 340, and cysteine 316-cysteine 332. An N-linked (GlcNAc...) asparagine glycan is attached at asparagine 104. Positions 163 to 211 (ANGAVCAFPFKFENKWYADCTSAGRSDGWLWCGTTTDYDKDKLFGFCPL) constitute a Fibronectin type-II domain. Positions 225–341 (LTGILYQINS…CVQKLGYICK (117 aa)) constitute a C-type lectin 1 domain. N-linked (GlcNAc...) asparagine glycosylation occurs at asparagine 344. 4 consecutive C-type lectin domains span residues 369–487 (YAGH…YICK), 511–626 (HGFY…FVCK), 655–778 (KTSM…WICQ), and 807–923 (YKDY…FICQ). 2 cysteine pairs are disulfide-bonded: cysteine 391–cysteine 486 and cysteine 463–cysteine 478. N-linked (GlcNAc...) asparagine glycosylation occurs at asparagine 529. Disulfide bonds link cysteine 532–cysteine 625, cysteine 600–cysteine 617, cysteine 680–cysteine 777, cysteine 753–cysteine 769, cysteine 828–cysteine 922, and cysteine 899–cysteine 914. Asparagine 926 and asparagine 930 each carry an N-linked (GlcNAc...) asparagine glycan. C-type lectin domains lie at 951-1079 (YKNK…YICQ), 1101-1212 (YGKS…FLCK), and 1240-1355 (FYGH…FICK). 6 cysteine pairs are disulfide-bonded: cysteine 976–cysteine 1078, cysteine 1051–cysteine 1070, cysteine 1122–cysteine 1211, cysteine 1189–cysteine 1203, cysteine 1262–cysteine 1354, and cysteine 1331–cysteine 1346. The N-linked (GlcNAc...) asparagine glycan is linked to asparagine 1159. Asparagine 1204 carries N-linked (GlcNAc...) asparagine glycosylation. The chain crosses the membrane as a helical span at residues 1389–1409 (AGVVTVVLLIVIGAGVAAYFF). The Cytoplasmic portion of the chain corresponds to 1410 to 1456 (YKKRHALHIPQEATFENTLYFNSNLSPGTSDTKDLMGNIEQNEHAII).

In terms of tissue distribution, detected in macrophages.

It is found in the endosome membrane. It localises to the cell membrane. In terms of biological role, mediates the endocytosis of glycoproteins by macrophages. Binds both sulfated and non-sulfated polysaccharide chains. Acts as phagocytic receptor for bacteria, fungi and other pathogens. This is Macrophage mannose receptor 1 (Mrc1) from Mus musculus (Mouse).